The following is a 299-amino-acid chain: Large ribosomal subunit protein eL22 (299 aa).

Disordered stretches follow at residues 1–142 and 155–178; these read MAPT…AAPA and VAKP…KKNV. 2 stretches are compositionally biased toward basic and acidic residues: residues 33–42 and 55–64; these read GKVEKPKAEA and KASEAAKDVK. 2 stretches are compositionally biased toward low complexity: residues 65–98 and 105–142; these read AAAA…AAAA and AAAA…AAPA.

The protein belongs to the eukaryotic ribosomal protein eL22 family.

The protein is Large ribosomal subunit protein eL22 (RpL22) of Drosophila melanogaster (Fruit fly).